We begin with the raw amino-acid sequence, 176 residues long: Telomerase RNA component interacting RNase (176 aa).

The segment covering 1–12 (MAARGRRAEPQG) has biased composition (basic and acidic residues). A disordered region spans residues 1–121 (MAARGRRAEP…TLSFVGKRRG (121 aa)). A compositionally biased stretch (low complexity) spans 45–56 (SGAGSSPVSGGV). Residues 68-83 (LFKRKMEEEQRQRQEE) are compositionally biased toward basic and acidic residues. A compositionally biased stretch (low complexity) spans 90-101 (RPDQSAAAAGPG). Lys-146 is subject to N6-acetyllysine.

Part of the telomerase RNA 3' end complex which contains about 488 proteins.

Its activity is regulated as follows. Zn(2+) inhibits the RNase activity while Mg(2+), Ca(2+), Mn(2+), K(+), Na(+), EDTA and EGTA show little effect on the exoribonuclease activity. Its function is as follows. Exoribonuclease that is part of the telomerase RNA 3' end processing complex and which has the ability to cleave all four unpaired RNA nucleotides from the 5' end or 3' end with higher efficiency for purine bases. The polypeptide is Telomerase RNA component interacting RNase (Homo sapiens (Human)).